The chain runs to 283 residues: 3-methyl-2-oxobutanoate hydroxymethyltransferase (283 aa).

Residues aspartate 46 and aspartate 85 each contribute to the Mg(2+) site. Residues 46-47 (DS), aspartate 85, and lysine 115 each bind 3-methyl-2-oxobutanoate. Glutamate 117 serves as a coordination point for Mg(2+). Glutamate 184 serves as the catalytic Proton acceptor.

The protein belongs to the PanB family. As to quaternary structure, homodecamer; pentamer of dimers. Mg(2+) is required as a cofactor.

The protein localises to the cytoplasm. The enzyme catalyses 3-methyl-2-oxobutanoate + (6R)-5,10-methylene-5,6,7,8-tetrahydrofolate + H2O = 2-dehydropantoate + (6S)-5,6,7,8-tetrahydrofolate. It participates in cofactor biosynthesis; (R)-pantothenate biosynthesis; (R)-pantoate from 3-methyl-2-oxobutanoate: step 1/2. In terms of biological role, catalyzes the reversible reaction in which hydroxymethyl group from 5,10-methylenetetrahydrofolate is transferred onto alpha-ketoisovalerate to form ketopantoate. This Acetivibrio thermocellus (strain ATCC 27405 / DSM 1237 / JCM 9322 / NBRC 103400 / NCIMB 10682 / NRRL B-4536 / VPI 7372) (Clostridium thermocellum) protein is 3-methyl-2-oxobutanoate hydroxymethyltransferase.